A 647-amino-acid chain; its full sequence is DNA mismatch repair protein MutL (647 aa).

Positions 393 to 423 are disordered; sequence VSLVANKQQPTVKQAKRSADDSDSEHGKLDY. Positions 409-423 are enriched in basic and acidic residues; the sequence is RSADDSDSEHGKLDY.

Belongs to the DNA mismatch repair MutL/HexB family.

Functionally, this protein is involved in the repair of mismatches in DNA. It is required for dam-dependent methyl-directed DNA mismatch repair. May act as a 'molecular matchmaker', a protein that promotes the formation of a stable complex between two or more DNA-binding proteins in an ATP-dependent manner without itself being part of a final effector complex. The polypeptide is DNA mismatch repair protein MutL (Streptococcus thermophilus (strain CNRZ 1066)).